A 168-amino-acid polypeptide reads, in one-letter code: MSLMDNLLGILRVRVQRGVNLAVRDVSSSDPYVVLKLGRQKLKTKVVKQNVNPQWQEDLSFTVTDPNLPLTLIVYDHDFFSKDDKMGDAEIDLKPYIEALRMELSGLPDGTIISTIGPSRGNCLAEESYIRWINDRIVQHICLRLRNVERGEVEIELQWIDLPGSKGL.

The C2 domain maps to 1–106 (MSLMDNLLGI…IEALRMELSG (106 aa)). 7 residues coordinate Ca(2+): arginine 24, aspartate 25, aspartate 30, aspartate 76, histidine 77, aspartate 78, and aspartate 84.

It belongs to the plant CAR protein family. As to quaternary structure, binds to PYR/PYL/RCAR abscisic acid intracellular receptors in an ABA-independent manner, both at the plasma membrane and in the nucleus. Requires Ca(2+) as cofactor.

The protein localises to the cell membrane. Its subcellular location is the nucleus. In terms of biological role, stimulates the GTPase/ATPase activities of Obg-like ATPases. Mediates the transient calcium-dependent interaction of PYR/PYL/RCAR abscisic acid (ABA) receptors with the plasma membrane and thus regulates ABA sensitivity. The chain is Protein C2-DOMAIN ABA-RELATED 3 from Arabidopsis thaliana (Mouse-ear cress).